We begin with the raw amino-acid sequence, 166 residues long: Large ribosomal subunit protein uL10 (166 aa).

This sequence belongs to the universal ribosomal protein uL10 family. As to quaternary structure, part of the ribosomal stalk of the 50S ribosomal subunit. The N-terminus interacts with L11 and the large rRNA to form the base of the stalk. The C-terminus forms an elongated spine to which L12 dimers bind in a sequential fashion forming a multimeric L10(L12)X complex.

Forms part of the ribosomal stalk, playing a central role in the interaction of the ribosome with GTP-bound translation factors. In Bacillus cereus (strain 03BB102), this protein is Large ribosomal subunit protein uL10.